The primary structure comprises 597 residues: Aspartate--tRNA ligase (597 aa).

Glu180 is a binding site for L-aspartate. The segment at 204–207 (QLFK) is aspartate. Arg226 contacts L-aspartate. Residues 226–228 (RDE) and Gln235 each bind ATP. Residue His454 participates in L-aspartate binding. Glu488 contributes to the ATP binding site. Residue Arg495 participates in L-aspartate binding. 540–543 (GLDR) serves as a coordination point for ATP.

This sequence belongs to the class-II aminoacyl-tRNA synthetase family. Type 1 subfamily. Homodimer.

The protein resides in the cytoplasm. The catalysed reaction is tRNA(Asp) + L-aspartate + ATP = L-aspartyl-tRNA(Asp) + AMP + diphosphate. Catalyzes the attachment of L-aspartate to tRNA(Asp) in a two-step reaction: L-aspartate is first activated by ATP to form Asp-AMP and then transferred to the acceptor end of tRNA(Asp). The sequence is that of Aspartate--tRNA ligase from Clostridium perfringens (strain SM101 / Type A).